The primary structure comprises 375 residues: Nucleolysin TIAR (375 aa).

2 consecutive RRM domains span residues 9-85 (RTLY…WATT) and 97-175 (FHVF…WATR). Lys122 carries the N6-acetyllysine modification. Residue Ser201 is modified to Phosphoserine. In terms of domain architecture, RRM 3 spans 205–277 (CTVYCGGIAS…HVVKCYWGKE (73 aa)). The tract at residues 345–375 (FGAQPPQGQAPPPVIPPPNQAGYGMASYQTQ) is disordered. Pro residues predominate over residues 352–363 (GQAPPPVIPPPN).

Interacts with FASTK. Post-translationally, phosphorylated by MAPK14 following DNA damage, releasing TIAR from GADD45A mRNA. As to expression, expressed in brain, heart, kidney, lung and skeletal muscle.

It localises to the nucleus. It is found in the cytoplasm. The protein localises to the cytolytic granule. Its subcellular location is the stress granule. Functionally, RNA-binding protein involved in alternative pre-RNA splicing and in cytoplasmic stress granules formation. Shows a preference for uridine-rich RNAs. Activates splicing of alternative exons with weak 5' splice sites followed by a U-rich stretch on its own pre-mRNA and on TIA1 mRNA. Promotes the inclusion of TIA1 exon 5 to give rise to the long isoform (isoform a) of TIA1. Acts downstream of the stress-induced phosphorylation of EIF2S1/EIF2A to promote the recruitment of untranslated mRNAs to cytoplasmic stress granules (SG). Possesses nucleolytic activity against cytotoxic lymphocyte target cells. May be involved in apoptosis. The protein is Nucleolysin TIAR (TIAL1) of Homo sapiens (Human).